A 259-amino-acid polypeptide reads, in one-letter code: Phosphatidylglycerol--prolipoprotein diacylglyceryl transferase (259 aa).

4 helical membrane passes run 9–29, 47–67, 83–103, and 109–129; these read IGPFAIHWYALCIMTGLVLAV, IDFIIIAFPIAIIGARLYYVI, IWNGGIAIYGGLITGAIVLFI, and VLNPIRFLDIIAPGVMLAQAI. Arginine 131 lines the a 1,2-diacyl-sn-glycero-3-phospho-(1'-sn-glycerol) pocket. 3 helical membrane-spanning segments follow: residues 167 to 187, 194 to 214, and 227 to 247; these read MPTFLFESVWNIIGFTIICYL, LLEGEVLAFYLIWYGIGRFVI, and LRVSQIVSIVLIILGIVFVIL.

It belongs to the Lgt family.

It localises to the cell membrane. It carries out the reaction L-cysteinyl-[prolipoprotein] + a 1,2-diacyl-sn-glycero-3-phospho-(1'-sn-glycerol) = an S-1,2-diacyl-sn-glyceryl-L-cysteinyl-[prolipoprotein] + sn-glycerol 1-phosphate + H(+). Its pathway is protein modification; lipoprotein biosynthesis (diacylglyceryl transfer). Its function is as follows. Catalyzes the transfer of the diacylglyceryl group from phosphatidylglycerol to the sulfhydryl group of the N-terminal cysteine of a prolipoprotein, the first step in the formation of mature lipoproteins. In Streptococcus uberis (strain ATCC BAA-854 / 0140J), this protein is Phosphatidylglycerol--prolipoprotein diacylglyceryl transferase.